The chain runs to 135 residues: Glutaredoxin-C5 (135 aa).

The 106-residue stretch at 29–134 (AERVERLASE…PLLKEAGALW (106 aa)) folds into the Glutaredoxin domain. A disulfide bridge links Cys-49 with Cys-52. Residues 132–135 (ALWL) carry the Responsive for interaction with TGA factors motif.

The protein belongs to the glutaredoxin family. CC-type subfamily.

It localises to the cytoplasm. Its subcellular location is the nucleus. Functionally, has a glutathione-disulfide oxidoreductase activity in the presence of NADPH and glutathione reductase. Reduces low molecular weight disulfides and proteins. This is Glutaredoxin-C5 (GRXC5) from Oryza sativa subsp. japonica (Rice).